The sequence spans 388 residues: Diacylglycerol O-acyltransferase 2 (388 aa).

The Cytoplasmic portion of the chain corresponds to 1 to 69 (MKTLIAAYSG…NRSKVEKQLQ (69 aa)). Residues 16 to 40 (RQAEADRSQRSHGGPALSREGSGRW) are disordered. The chain crosses the membrane as a helical span at residues 70–88 (VISVLQWVLSFLVLGVACS). At 89–92 (AILM) the chain is on the lumenal side. Residues 93-112 (YIFCTDCWLIAVLYFTWLVF) form a helical membrane-spanning segment. Residues 113-388 (DWNTPKKGGR…LPETEVLEVN (276 aa)) lie on the Cytoplasmic side of the membrane.

The protein belongs to the diacylglycerol acyltransferase family. In terms of assembly, forms multimeric complexes consisting of several DGAT2 subunits. Interacts with SLC27A1 and this interaction is enhanced in the presence of ZFYVE1. In terms of tissue distribution, predominantly expressed in liver and white adipose tissue. Expressed at lower level in mammary gland, testis and peripheral blood leukocytes. Expressed in sebaceous glands of normal skin but decreased psoriatic skin.

It localises to the endoplasmic reticulum membrane. Its subcellular location is the lipid droplet. The protein localises to the cytoplasm. It is found in the perinuclear region. It carries out the reaction an acyl-CoA + a 1,2-diacyl-sn-glycerol = a triacyl-sn-glycerol + CoA. It catalyses the reaction all-trans-retinol + an acyl-CoA = an all-trans-retinyl ester + CoA. The catalysed reaction is 2-(9Z-octadecenoyl)-glycerol + (9Z)-octadecenoyl-CoA = 1,2-di-(9Z-octadecenoyl)-sn-glycerol + CoA. The enzyme catalyses 1,2-di-(9Z-octadecenoyl)-sn-glycerol + (9Z)-octadecenoyl-CoA = 1,2,3-tri-(9Z-octadecenoyl)-glycerol + CoA. It carries out the reaction all-trans-retinol + hexadecanoyl-CoA = all-trans-retinyl hexadecanoate + CoA. It catalyses the reaction 1-O-(9Z-octadecenyl)-glycerol + (9Z)-octadecenoyl-CoA = 1-O-(9Z-octadecyl)-3-(9Z-octadecenoyl)-glycerol + CoA. The catalysed reaction is 1-(9Z-octadecenoyl)-glycerol + (9Z)-octadecenoyl-CoA = 1,2-di-(9Z-octadecenoyl)-glycerol + CoA. The enzyme catalyses 1,2-di-(9Z-octadecenoyl)-sn-glycerol + hexadecanoyl-CoA = 1,2-di-(9Z)-octadecenoyl-3-hexadecanoyl-sn-glycerol + CoA. It carries out the reaction 1,3-di-(9Z-octadecenoyl)-glycerol + (9Z)-octadecenoyl-CoA = 1,2,3-tri-(9Z-octadecenoyl)-glycerol + CoA. It catalyses the reaction 2,3-di-(9Z)-octadecenoyl-sn-glycerol + (9Z)-octadecenoyl-CoA = 1,2,3-tri-(9Z-octadecenoyl)-glycerol + CoA. The catalysed reaction is 2-(9Z-octadecenoyl)-glycerol + hexadecanoyl-CoA = 1-hexadecanoyl-2-(9Z-octadecenoyl)-sn-glycerol + CoA. It functions in the pathway glycerolipid metabolism; triacylglycerol biosynthesis. Its activity is regulated as follows. Inhibited by niacin. In terms of biological role, essential acyltransferase that catalyzes the terminal and only committed step in triacylglycerol synthesis by using diacylglycerol and fatty acyl CoA as substrates. Required for synthesis and storage of intracellular triglycerides. Probably plays a central role in cytosolic lipid accumulation. In liver, is primarily responsible for incorporating endogenously synthesized fatty acids into triglycerides. Also functions as an acyl-CoA retinol acyltransferase (ARAT). Also able to use 1-monoalkylglycerol (1-MAkG) as an acyl acceptor for the synthesis of monoalkyl-monoacylglycerol (MAMAG). This chain is Diacylglycerol O-acyltransferase 2, found in Homo sapiens (Human).